Reading from the N-terminus, the 427-residue chain is Kallistatin (427 aa).

A signal peptide spans 1-20; the sequence is MHLIDYLLLLLVGLLALSHG. N-linked (GlcNAc...) asparagine glycosylation is found at Asn-33, Asn-108, and Asn-157. N-linked (GlcNAc...) (complex) asparagine glycosylation occurs at Asn-238.

It belongs to the serpin family. Monomer and some homodimers. Post-translationally, the N-terminus is blocked. Expressed by the liver and secreted in plasma.

The protein localises to the secreted. Functionally, inhibits human amidolytic and kininogenase activities of tissue kallikrein. Inhibition is achieved by formation of an equimolar, heat- and SDS-stable complex between the inhibitor and the enzyme, and generation of a small C-terminal fragment of the inhibitor due to cleavage at the reactive site by tissue kallikrein. The protein is Kallistatin (SERPINA4) of Homo sapiens (Human).